Consider the following 580-residue polypeptide: Acyl-coenzyme A synthetase ACSM4, mitochondrial (580 aa).

The transit peptide at 1–22 directs the protein to the mitochondrion; that stretch reads MKVLLHCQRLRFIWLAKPAGRH. Residues 229–237, 368–373, aspartate 455, arginine 470, and lysine 566 each bind ATP; these read TSGTTGSPK and EGYGQT.

It belongs to the ATP-dependent AMP-binding enzyme family. The cofactor is Mg(2+). Mn(2+) serves as cofactor.

Its subcellular location is the mitochondrion. The enzyme catalyses a medium-chain fatty acid + ATP + CoA = a medium-chain fatty acyl-CoA + AMP + diphosphate. It carries out the reaction hexanoate + ATP + CoA = hexanoyl-CoA + AMP + diphosphate. It catalyses the reaction octanoate + ATP + CoA = octanoyl-CoA + AMP + diphosphate. The catalysed reaction is decanoate + ATP + CoA = decanoyl-CoA + AMP + diphosphate. The enzyme catalyses dodecanoate + ATP + CoA = dodecanoyl-CoA + AMP + diphosphate. Its function is as follows. Catalyzes the activation of fatty acids by CoA to produce an acyl-CoA, the first step in fatty acid metabolism. Capable of activating medium-chain fatty acids with a preference for C6-12 fatty acids. The chain is Acyl-coenzyme A synthetase ACSM4, mitochondrial (Acsm4) from Mus musculus (Mouse).